The following is a 432-amino-acid chain: MDISAYQHMNIRMSTRGKRPLRNLTPNDKVRAIQRIHNGETKASVSRDLGVPESTLRGWCKNEQKLRFMCRQLGPDHLGIDTHTPPEKRAKFDLQLLPPKLATLPNYDDLGLSNFLFSATEFPTQKESLFEKLSLVEFVKKNGLHPSAIRELGDTHSLNAAANAVSGVDYSTNNMINQLTLLAQLNSKLSYQMGESADTDIKSPQSTTDITDTAREENSTKTSCPLLTVKNWAKDPAKRAHFNQATQLNPNNDKNNNAVDPSYSNLTTMKYPLIMEPVKSIYPETTVSAIPPPPFSTYSDLASAASAPTTDNDCQGAALLDWCKLFNASLNFLAFAAAAASMQPAGGTIPKSTATQLPATEADETYPFNNNLVKRLSPLAHSDASNESYFDSEPEDLSVRSCASVSSRNNSRSQTPDKSTATSIACLSDGEQ.

The HTH psq-type domain occupies 15 to 66 (TRGKRPLRNLTPNDKVRAIQRIHNGETKASVSRDLGVPESTLRGWCKNEQKL). A DNA-binding region (H-T-H motif) is located at residues 42 to 62 (KASVSRDLGVPESTLRGWCKN). 2 disordered regions span residues 195-221 (ESAD…NSTK) and 401-432 (SCAS…DGEQ). 2 stretches are compositionally biased toward polar residues: residues 202–211 (KSPQSTTDIT) and 401–425 (SCAS…TSIA).

As to quaternary structure, interacts with itself, dan, ey and dac to form a complex (or complexes) containing the RD factors.

It localises to the nucleus. In terms of biological role, probable transcription factor with a role in the retinal determination (RD) network. Regulates ato expression and is required for normal R8 induction and differentiation. Danr appears to repress Dan expression, but Dan is required for Danr expression anterior to the morphogenetic furrow (MF). Dan and Danr lie downstream of so and require dac function for highest levels of expression. Contributes to differentiation of antenna-specific characteristics; effector gene that acts downstream of homothorax (hth), Distal-less (Dll), cut (ct) and spineless (ss) genes to control differentiation of distal antennal structures. The sequence is that of Protein distal antenna-related from Drosophila pseudoobscura pseudoobscura (Fruit fly).